The following is a 650-amino-acid chain: PTS system mannose-specific EIIBCA component (650 aa).

Residues 1 to 98 (MKLLAITSCP…PEELIQKALN (98 aa)) enclose the PTS EIIB type-2 domain. Cys9 functions as the Phosphocysteine intermediate; for EIIB activity in the catalytic mechanism. One can recognise a PTS EIIC type-2 domain in the interval 123–456 (IYRHLMNGVS…SLVTALFVNV (334 aa)). Transmembrane regions (helical) follow at residues 133–153 (FMVP…TLGG), 174–194 (IGSA…AYSI), 199–219 (GLVP…YDSA), 221–241 (GAGF…ALWI), 256–276 (IIII…FLIG), 297–317 (SSIL…GGPV), and 336–356 (IMGP…IATF). Ser365 is subject to Phosphoserine. 3 consecutive transmembrane segments (helical) span residues 369 to 389 (MGKA…IPFA), 396 to 416 (VIPS…IGNV), and 436 to 456 (VLMF…FVNV). The PTS EIIA type-2 domain maps to 504–649 (DIISPELIEP…EEAYKLLEEI (146 aa)). His566 acts as the Tele-phosphohistidine intermediate; for EIIA activity in catalysis.

It localises to the cell membrane. The catalysed reaction is D-mannose(out) + N(pros)-phospho-L-histidyl-[protein] = D-mannose 6-phosphate(in) + L-histidyl-[protein]. The phosphoenolpyruvate-dependent sugar phosphotransferase system (sugar PTS), a major carbohydrate active -transport system, catalyzes the phosphorylation of incoming sugar substrates concomitantly with their translocation across the cell membrane. This system is involved in mannose transport. This Bacillus subtilis (strain 168) protein is PTS system mannose-specific EIIBCA component (manP).